We begin with the raw amino-acid sequence, 195 residues long: Ferredoxin-2, mitochondrial (195 aa).

A mitochondrion-targeting transit peptide spans 1–61; that stretch reads MAAAAAVRAG…RRLRTSIGVC (61 aa). The region spanning 81 to 182 is the 2Fe-2S ferredoxin-type domain; it reads NVVYIDRSGR…GMELTLPKVT (102 aa). Cysteine 117, cysteine 123, cysteine 126, and cysteine 163 together coordinate [2Fe-2S] cluster.

It belongs to the adrenodoxin/putidaredoxin family. Component of the mitochondrial core iron-sulfur cluster (ISC) complex composed of NFS1, LYRM4, NDUFAB1, ISCU, FXN, and FDX2; this complex is a heterohexamer containing two copies of each monomer. Form a heterodimer complex with NFS1. [2Fe-2S] cluster serves as cofactor.

It localises to the mitochondrion. The protein resides in the mitochondrion matrix. In terms of biological role, electron donor, of the core iron-sulfur cluster (ISC) assembly complex, that acts to reduce the persulfide into sulfide during [2Fe-2S] clusters assembly on the scaffolding protein ISCU. The core iron-sulfur cluster (ISC) assembly complex is involved in the de novo synthesis of a [2Fe-2S] cluster, the first step of the mitochondrial iron-sulfur protein biogenesis. This process is initiated by the cysteine desulfurase complex (NFS1:LYRM4:NDUFAB1) that produces persulfide which is delivered on the scaffold protein ISCU in a FXN-dependent manner. Then this complex is stabilized by FDX2 which provides reducing equivalents to accomplish the [2Fe-2S] cluster assembly. Finally, the [2Fe-2S] cluster is transferred from ISCU to chaperone proteins, including HSCB, HSPA9 and GLRX5. Essential for coenzyme Q biosynthesis: together with FDXR, transfers the electrons required for the hydroxylation reaction performed by COQ6. This Danio rerio (Zebrafish) protein is Ferredoxin-2, mitochondrial.